The primary structure comprises 109 residues: Small ribosomal subunit protein uS17 (109 aa).

This sequence belongs to the universal ribosomal protein uS17 family. As to quaternary structure, part of the 30S ribosomal subunit.

In terms of biological role, one of the primary rRNA binding proteins, it binds specifically to the 5'-end of 16S ribosomal RNA. In Methanosarcina mazei (strain ATCC BAA-159 / DSM 3647 / Goe1 / Go1 / JCM 11833 / OCM 88) (Methanosarcina frisia), this protein is Small ribosomal subunit protein uS17.